A 684-amino-acid chain; its full sequence is Methionine--tRNA ligase (684 aa).

Positions 15–25 match the 'HIGH' region motif; that stretch reads PYANGAIHLGH. Residues Cys-146, Cys-149, Cys-159, and Cys-162 each contribute to the Zn(2+) site. The short motif at 331–335 is the 'KMSKS' region element; sequence KMSKS. Lys-334 lines the ATP pocket. Positions 582 to 684 constitute a tRNA-binding domain; sequence DFAKLDLRVA…SGVTAGMQVR (103 aa).

Belongs to the class-I aminoacyl-tRNA synthetase family. MetG type 1 subfamily. Homodimer. Requires Zn(2+) as cofactor.

It localises to the cytoplasm. The enzyme catalyses tRNA(Met) + L-methionine + ATP = L-methionyl-tRNA(Met) + AMP + diphosphate. Functionally, is required not only for elongation of protein synthesis but also for the initiation of all mRNA translation through initiator tRNA(fMet) aminoacylation. In Glaesserella parasuis serovar 5 (strain SH0165) (Haemophilus parasuis), this protein is Methionine--tRNA ligase.